Here is a 732-residue protein sequence, read N- to C-terminus: Acylamino-acid-releasing enzyme (732 aa).

The residue at position 1 (M1) is an N-acetylmethionine. S187 carries the post-translational modification Phosphoserine. Active-site charge relay system residues include S587, D675, and H707.

This sequence belongs to the peptidase S9C family. As to quaternary structure, homotetramer. As to expression, expressed in the liver (at protein level).

It localises to the cytoplasm. The catalysed reaction is Cleavage of an N-acetyl or N-formyl amino acid from the N-terminus of a polypeptide.. With respect to regulation, homotetramerization is required for activity. Tetramerization results in the formation of a gated channel which is involved in substrate selection and substrate access to the catalytic sites. Functionally, this enzyme catalyzes the hydrolysis of the N-terminal peptide bond of an N-acetylated peptide to generate an N-acetylated amino acid and a peptide with a free N-terminus. It preferentially cleaves off Ac-Ala, Ac-Met and Ac-Ser. Also, involved in the degradation of oxidized and glycated proteins. The sequence is that of Acylamino-acid-releasing enzyme (APEH) from Sus scrofa (Pig).